We begin with the raw amino-acid sequence, 469 residues long: Ubiquitin carboxyl-terminal hydrolase MINDY-1 (469 aa).

The segment at 1–85 (MEYHQPEDPA…APPGPTLGTL (85 aa)) is disordered. Over residues 23 to 53 (ENHEVLAGPDEHPQDTDARDADGEAREREPA) the composition is skewed to basic and acidic residues. Low complexity predominate over residues 66–76 (LESPLPEASSA). Residue Ser-103 is modified to Phosphoserine. The active-site Nucleophile is Cys-137. Residue His-319 is the Proton acceptor of the active site. The ubiquitin-binding domain (UBD) stretch occupies residues 388–426 (QVDQDYLIALSLQQQQPRGPLGLTDLELAQQLQQEEYQQ). Position 441 is a phosphoserine (Ser-441). A disordered region spans residues 441–469 (SLQGRGATSGRPAGERRQRPKHESDCILL). A compositionally biased stretch (basic and acidic residues) spans 453–469 (AGERRQRPKHESDCILL).

Belongs to the MINDY deubiquitinase family. FAM63 subfamily.

The catalysed reaction is Thiol-dependent hydrolysis of ester, thioester, amide, peptide and isopeptide bonds formed by the C-terminal Gly of ubiquitin (a 76-residue protein attached to proteins as an intracellular targeting signal).. Hydrolase that can specifically remove 'Lys-48'-linked conjugated ubiquitin from proteins. Has exodeubiquitinase activity and has a preference for long polyubiquitin chains. May play a regulatory role at the level of protein turnover. In Homo sapiens (Human), this protein is Ubiquitin carboxyl-terminal hydrolase MINDY-1.